The chain runs to 533 residues: Glucose-6-phosphate isomerase (533 aa).

Glutamate 341 (proton donor) is an active-site residue. Active-site residues include histidine 372 and lysine 501.

This sequence belongs to the GPI family.

It is found in the cytoplasm. The catalysed reaction is alpha-D-glucose 6-phosphate = beta-D-fructose 6-phosphate. It participates in carbohydrate biosynthesis; gluconeogenesis. The protein operates within carbohydrate degradation; glycolysis; D-glyceraldehyde 3-phosphate and glycerone phosphate from D-glucose: step 2/4. Its function is as follows. Catalyzes the reversible isomerization of glucose-6-phosphate to fructose-6-phosphate. The sequence is that of Glucose-6-phosphate isomerase from Cereibacter sphaeroides (strain KD131 / KCTC 12085) (Rhodobacter sphaeroides).